Reading from the N-terminus, the 845-residue chain is Protein TSD2 (845 aa).

A disordered region spans residues 193–283; that stretch reads DVDSDSESDS…SASATRLTNA (91 aa). Basic and acidic residues-rich tracts occupy residues 202–212 and 230–242; these read SDSHSDSHSDS and ARSH…DGSG. Basic residues predominate over residues 243 to 272; it reads GKRKRGSHSPLSRRRQRHKQGQRHKPRHRS.

Belongs to the CDC45 family.

The protein resides in the nucleus. Its function is as follows. Temperature-sensitive protein required for DNA synthesis. May be a transcription factor that regulates the level or influences the stability of DNA polymerases or auxiliary proteins. The protein is Protein TSD2 (TSD2) of Mycosarcoma maydis (Corn smut fungus).